The primary structure comprises 120 residues: Large ribosomal subunit protein uL18 (120 aa).

The segment at 1-29 (MITKPNKNAGRKKRHAHVRRTLSGTPQRP) is disordered. Basic residues predominate over residues 9–20 (AGRKKRHAHVRR).

The protein belongs to the universal ribosomal protein uL18 family. As to quaternary structure, part of the 50S ribosomal subunit; part of the 5S rRNA/L5/L18/L25 subcomplex. Contacts the 5S and 23S rRNAs.

Functionally, this is one of the proteins that bind and probably mediate the attachment of the 5S RNA into the large ribosomal subunit, where it forms part of the central protuberance. This is Large ribosomal subunit protein uL18 from Shouchella clausii (strain KSM-K16) (Alkalihalobacillus clausii).